Consider the following 331-residue polypeptide: 2-hydroxyacid dehydrogenase homolog (331 aa).

NAD(+) contacts are provided by residues 154–155 (HI), 234–236 (TSR), and Asp260. Arg236 is a catalytic residue. Glu265 is a catalytic residue. His297 acts as the Proton donor in catalysis. 297–300 (HQAF) is an NAD(+) binding site.

It belongs to the D-isomer specific 2-hydroxyacid dehydrogenase family.

The polypeptide is 2-hydroxyacid dehydrogenase homolog (ddh) (Zymomonas mobilis subsp. mobilis (strain ATCC 31821 / ZM4 / CP4)).